The primary structure comprises 870 residues: DNA mismatch repair protein MutS (870 aa).

Gly-620–Ser-627 is an ATP binding site.

The protein belongs to the DNA mismatch repair MutS family.

Functionally, this protein is involved in the repair of mismatches in DNA. It is possible that it carries out the mismatch recognition step. This protein has a weak ATPase activity. In Acetivibrio thermocellus (strain ATCC 27405 / DSM 1237 / JCM 9322 / NBRC 103400 / NCIMB 10682 / NRRL B-4536 / VPI 7372) (Clostridium thermocellum), this protein is DNA mismatch repair protein MutS.